The chain runs to 511 residues: ATP synthase subunit alpha (511 aa).

Residue Gly169–Thr176 participates in ATP binding.

Belongs to the ATPase alpha/beta chains family. As to quaternary structure, F-type ATPases have 2 components, CF(1) - the catalytic core - and CF(0) - the membrane proton channel. CF(1) has five subunits: alpha(3), beta(3), gamma(1), delta(1), epsilon(1). CF(0) has three main subunits: a(1), b(2) and c(9-12). The alpha and beta chains form an alternating ring which encloses part of the gamma chain. CF(1) is attached to CF(0) by a central stalk formed by the gamma and epsilon chains, while a peripheral stalk is formed by the delta and b chains.

It localises to the cell inner membrane. The catalysed reaction is ATP + H2O + 4 H(+)(in) = ADP + phosphate + 5 H(+)(out). Functionally, produces ATP from ADP in the presence of a proton gradient across the membrane. The alpha chain is a regulatory subunit. This Bartonella tribocorum (strain CIP 105476 / IBS 506) protein is ATP synthase subunit alpha.